We begin with the raw amino-acid sequence, 498 residues long: MRINPTTSGPGVSTLEKKNLGRIAQIIGPVLDVAFPPGKMPNIYNALVVKGRDTVGQPINVTCEVQQLLGNNRVRAVAMSATDGLMRGMEVIDTGAPLSVPVGGATLGRIFNVLGEPVDNLGPVDTRTTSPIHRSAPAFIQLDTKLSIFETGIKVVDLLAPYRRGGKIGLFGGAGVGKTVLIMELINNIAKAHGGVSVFGGVGERTREGNDLYMEMKESGVINEQNIAESKVALVYGQMNEPPGARMRVGLTALTMAEYFRDVNEQDVLLFIDNIFRFVQAGSEVSALLGRMPSAVGYQPTLSTEMGSLQERITSTKEGSITSIQAVYVPADDLTDPAPATTFAHLDATTVLSRGLAAKGIYPAVDPLDSTSTMLQPRIVGEEHYETAQRVKQTSQRYKELQDIIAILGLDELSEEDRLTVARARKIERFLSQPFFVAEVFTGSPGKYVGLAETIRGFQLILSGELDGLPEQAFYLVGNIDEATAKAMNLEVESKLKK.

172 to 179 contacts ATP; that stretch reads GGAGVGKT.

This sequence belongs to the ATPase alpha/beta chains family. As to quaternary structure, F-type ATPases have 2 components, CF(1) - the catalytic core - and CF(0) - the membrane proton channel. CF(1) has five subunits: alpha(3), beta(3), gamma(1), delta(1), epsilon(1). CF(0) has four main subunits: a(1), b(1), b'(1) and c(9-12).

Its subcellular location is the plastid. It is found in the chloroplast thylakoid membrane. It carries out the reaction ATP + H2O + 4 H(+)(in) = ADP + phosphate + 5 H(+)(out). Produces ATP from ADP in the presence of a proton gradient across the membrane. The catalytic sites are hosted primarily by the beta subunits. The sequence is that of ATP synthase subunit beta, chloroplastic from Magnolia tripetala (Umbrella-tree).